Here is a 415-residue protein sequence, read N- to C-terminus: 3-isopropylmalate dehydratase large subunit (415 aa).

[4Fe-4S] cluster-binding residues include C295, C353, and C356.

It belongs to the aconitase/IPM isomerase family. LeuC type 2 subfamily. In terms of assembly, heterodimer of LeuC and LeuD. The cofactor is [4Fe-4S] cluster.

The catalysed reaction is (2R,3S)-3-isopropylmalate = (2S)-2-isopropylmalate. It participates in amino-acid biosynthesis; L-leucine biosynthesis; L-leucine from 3-methyl-2-oxobutanoate: step 2/4. Catalyzes the isomerization between 2-isopropylmalate and 3-isopropylmalate, via the formation of 2-isopropylmaleate. This is 3-isopropylmalate dehydratase large subunit from Pyrobaculum aerophilum (strain ATCC 51768 / DSM 7523 / JCM 9630 / CIP 104966 / NBRC 100827 / IM2).